The sequence spans 170 residues: Peptide deformylase (170 aa).

Fe cation is bound by residues C94 and H136. The active site involves E137. A Fe cation-binding site is contributed by H140.

It belongs to the polypeptide deformylase family. Requires Fe(2+) as cofactor.

It catalyses the reaction N-terminal N-formyl-L-methionyl-[peptide] + H2O = N-terminal L-methionyl-[peptide] + formate. In terms of biological role, removes the formyl group from the N-terminal Met of newly synthesized proteins. Requires at least a dipeptide for an efficient rate of reaction. N-terminal L-methionine is a prerequisite for activity but the enzyme has broad specificity at other positions. The protein is Peptide deformylase of Stenotrophomonas maltophilia (strain R551-3).